The primary structure comprises 168 residues: Ribosome maturation factor RimM (168 aa).

The 72-residue stretch at 95 to 166 folds into the PRC barrel domain; that stretch reads EHEFYYSDII…RIQITPMEGL (72 aa).

The protein belongs to the RimM family. As to quaternary structure, binds ribosomal protein uS19.

The protein resides in the cytoplasm. Functionally, an accessory protein needed during the final step in the assembly of 30S ribosomal subunit, possibly for assembly of the head region. Essential for efficient processing of 16S rRNA. May be needed both before and after RbfA during the maturation of 16S rRNA. It has affinity for free ribosomal 30S subunits but not for 70S ribosomes. The sequence is that of Ribosome maturation factor RimM from Staphylococcus saprophyticus subsp. saprophyticus (strain ATCC 15305 / DSM 20229 / NCIMB 8711 / NCTC 7292 / S-41).